A 299-amino-acid chain; its full sequence is MSDLPDTDFTQRFIFDERDVRGEWVSLDDSYAAVLARHEYPQPVQVLLGELMAATALLVGAMKFDGLLILQARSAGPIPLLMVECSSEREIRGMARYEADQIPAGATLSQLMPDGHLTLTIDPVKGQRYQGTVDLDGANLSECFTNYFVQSQQLNTRFWLNAQGGKARGLLLQQLPRDRQPDDEEREDSWQHVVALAKTLKPEEWTEGNETLLHRLYHEDAVRLFDIQPLRFNCSCSRERSGNALVSLGEHDAKALVDECGGTVEIDCQFCNERYFFDASDVAQLFAGGGTDVASETRH.

Disulfide bonds link cysteine 234-cysteine 236 and cysteine 268-cysteine 271.

Belongs to the HSP33 family. Under oxidizing conditions two disulfide bonds are formed involving the reactive cysteines. Under reducing conditions zinc is bound to the reactive cysteines and the protein is inactive.

Its subcellular location is the cytoplasm. Functionally, redox regulated molecular chaperone. Protects both thermally unfolding and oxidatively damaged proteins from irreversible aggregation. Plays an important role in the bacterial defense system toward oxidative stress. The protein is 33 kDa chaperonin of Pseudomonas putida (strain ATCC 47054 / DSM 6125 / CFBP 8728 / NCIMB 11950 / KT2440).